A 198-amino-acid chain; its full sequence is dTTP/UTP pyrophosphatase (198 aa).

The active-site Proton acceptor is the aspartate 75.

The protein belongs to the Maf family. YhdE subfamily. A divalent metal cation is required as a cofactor.

The protein resides in the cytoplasm. It carries out the reaction dTTP + H2O = dTMP + diphosphate + H(+). The enzyme catalyses UTP + H2O = UMP + diphosphate + H(+). In terms of biological role, nucleoside triphosphate pyrophosphatase that hydrolyzes dTTP and UTP. May have a dual role in cell division arrest and in preventing the incorporation of modified nucleotides into cellular nucleic acids. In Wolbachia sp. subsp. Drosophila simulans (strain wRi), this protein is dTTP/UTP pyrophosphatase.